The following is a 150-amino-acid chain: Lipoprotein signal peptidase (150 aa).

3 helical membrane-spanning segments follow: residues 5–25 (LSLV…NWVV), 59–79 (QQWF…WFLW), and 83–103 (GQNW…GNFI). Catalysis depends on residues D113 and D129. A helical transmembrane segment spans residues 124-144 (IFNIADILLSVGFVVLFIAIL).

This sequence belongs to the peptidase A8 family.

The protein localises to the cell membrane. The enzyme catalyses Release of signal peptides from bacterial membrane prolipoproteins. Hydrolyzes -Xaa-Yaa-Zaa-|-(S,diacylglyceryl)Cys-, in which Xaa is hydrophobic (preferably Leu), and Yaa (Ala or Ser) and Zaa (Gly or Ala) have small, neutral side chains.. It functions in the pathway protein modification; lipoprotein biosynthesis (signal peptide cleavage). In terms of biological role, this protein specifically catalyzes the removal of signal peptides from prolipoproteins. In Lactococcus lactis subsp. cremoris (strain MG1363), this protein is Lipoprotein signal peptidase.